A 334-amino-acid chain; its full sequence is Glycerol-3-phosphate dehydrogenase [NAD(P)+] (334 aa).

Residues serine 14, tyrosine 15, histidine 35, and lysine 109 each contribute to the NADPH site. Sn-glycerol 3-phosphate-binding residues include lysine 109, glycine 138, and threonine 140. Position 142 (alanine 142) interacts with NADPH. Lysine 194, aspartate 247, serine 257, arginine 258, and asparagine 259 together coordinate sn-glycerol 3-phosphate. Lysine 194 functions as the Proton acceptor in the catalytic mechanism. Residue arginine 258 coordinates NADPH. NADPH is bound by residues valine 282 and glutamate 284.

This sequence belongs to the NAD-dependent glycerol-3-phosphate dehydrogenase family.

The protein localises to the cytoplasm. It catalyses the reaction sn-glycerol 3-phosphate + NAD(+) = dihydroxyacetone phosphate + NADH + H(+). The catalysed reaction is sn-glycerol 3-phosphate + NADP(+) = dihydroxyacetone phosphate + NADPH + H(+). It participates in membrane lipid metabolism; glycerophospholipid metabolism. Its function is as follows. Catalyzes the reduction of the glycolytic intermediate dihydroxyacetone phosphate (DHAP) to sn-glycerol 3-phosphate (G3P), the key precursor for phospholipid synthesis. The sequence is that of Glycerol-3-phosphate dehydrogenase [NAD(P)+] from Psychromonas ingrahamii (strain DSM 17664 / CCUG 51855 / 37).